The chain runs to 346 residues: Methionine import ATP-binding protein MetN 1 (346 aa).

In terms of domain architecture, ABC transporter spans 2–241; sequence IELKNVSKVF…PQHVTTKKFV (240 aa). 38–45 serves as a coordination point for ATP; that stretch reads GYSGAGKS.

It belongs to the ABC transporter superfamily. Methionine importer (TC 3.A.1.24) family. The complex is composed of two ATP-binding proteins (MetN), two transmembrane proteins (MetI) and a solute-binding protein (MetQ).

It is found in the cell membrane. The catalysed reaction is L-methionine(out) + ATP + H2O = L-methionine(in) + ADP + phosphate + H(+). The enzyme catalyses D-methionine(out) + ATP + H2O = D-methionine(in) + ADP + phosphate + H(+). In terms of biological role, part of the ABC transporter complex MetNIQ involved in methionine import. Responsible for energy coupling to the transport system. The sequence is that of Methionine import ATP-binding protein MetN 1 from Bacillus anthracis.